We begin with the raw amino-acid sequence, 429 residues long: Phenylalanine--tRNA ligase, chloroplastic/mitochondrial (429 aa).

A chloroplast and mitochondrion-targeting transit peptide spans Met-1–Ser-53. The residue at position 54 (Ala-54) is an N-acetylalanine. Substrate is bound by residues Ser-163–Gln-166, Arg-185, Thr-192–Tyr-194, Gln-199–Glu-201, Glu-269, and Phe-294. In terms of domain architecture, FDX-ACB spans Ser-338–Arg-429.

It belongs to the class-II aminoacyl-tRNA synthetase family. As to quaternary structure, monomer.

The protein resides in the plastid. It localises to the chloroplast stroma. Its subcellular location is the mitochondrion matrix. The enzyme catalyses tRNA(Phe) + L-phenylalanine + ATP = L-phenylalanyl-tRNA(Phe) + AMP + diphosphate + H(+). In terms of biological role, is responsible for the charging of tRNA(Phe) with phenylalanine in mitochondrial translation. This chain is Phenylalanine--tRNA ligase, chloroplastic/mitochondrial, found in Arabidopsis thaliana (Mouse-ear cress).